The following is a 99-amino-acid chain: Malonate decarboxylase acyl carrier protein (99 aa).

At Ser-25 the chain carries O-(phosphoribosyl dephospho-coenzyme A)serine.

This sequence belongs to the MdcC family. In terms of processing, covalently binds the prosthetic group of malonate decarboxylase.

Its subcellular location is the cytoplasm. Its function is as follows. Subunit of malonate decarboxylase, it is an acyl carrier protein to which acetyl and malonyl thioester residues are bound via a 2'-(5''-phosphoribosyl)-3'-dephospho-CoA prosthetic group and turn over during the catalytic mechanism. The polypeptide is Malonate decarboxylase acyl carrier protein (Pseudomonas aeruginosa (strain LESB58)).